The primary structure comprises 327 residues: Zinc transport protein ZntB (327 aa).

Residues 1 to 273 (MEAIKGSEVN…ARRTYTMSLM (273 aa)) are Cytoplasmic-facing. A helical transmembrane segment spans residues 274–294 (AMVFLPSTFLTGLFGVNLGGI). At 295 to 300 (PGGAWH) the chain is on the periplasmic side. Residues 301-321 (FGFSMFCILLVVLIGGVTLWL) traverse the membrane as a helical segment. The Cytoplasmic portion of the chain corresponds to 322-327 (HRSKWL).

This sequence belongs to the CorA metal ion transporter (MIT) (TC 1.A.35) family.

It localises to the cell inner membrane. The enzyme catalyses Zn(2+)(out) + H(+)(out) = Zn(2+)(in) + H(+)(in). In terms of biological role, zinc transporter. Acts as a Zn(2+):proton symporter, which likely mediates zinc ion uptake. In Citrobacter koseri (strain ATCC BAA-895 / CDC 4225-83 / SGSC4696), this protein is Zinc transport protein ZntB.